The sequence spans 145 residues: Regulator of sigma D (145 aa).

The protein belongs to the Rsd/AlgQ family. As to quaternary structure, interacts with RpoD.

It localises to the cytoplasm. Functionally, binds RpoD and negatively regulates RpoD-mediated transcription activation by preventing the interaction between the primary sigma factor RpoD with the catalytic core of the RNA polymerase and with promoter DNA. May be involved in replacement of the RNA polymerase sigma subunit from RpoD to RpoS during the transition from exponential growth to the stationary phase. The sequence is that of Regulator of sigma D from Sodalis glossinidius (strain morsitans).